A 965-amino-acid polypeptide reads, in one-letter code: Phosphatidylethanolamine N-methyltransferase (965 aa).

The Lumenal portion of the chain corresponds to 1–82; sequence MDRGLSTGTN…SPSEPKNLSD (82 aa). A disordered region spans residues 34-54; that stretch reads PTVTNASNGKDKAGKTFGRTP. The chain crosses the membrane as a helical span at residues 83–103; the sequence is LVVLTILAGHIFLLWILPSGA. The Cytoplasmic portion of the chain corresponds to 104–106; that stretch reads KIP. A helical transmembrane segment spans residues 107–127; that stretch reads VFAVIYLFWRSCYNAGIGWLL. Residues 128 to 192 are Lumenal-facing; it reads HNQSHHKTLV…EYNTWLVFRR (65 aa). A helical transmembrane segment spans residues 193–213; it reads LVDLILMCDFASYCLFAIACS. The Cytoplasmic portion of the chain corresponds to 214 to 220; that stretch reads RHPANES. A helical membrane pass occupies residues 221-241; the sequence is VLMTVIRWTSGIALVLFNLWV. Over 242 to 274 the chain is Lumenal; the sequence is KLDAHRVVKDYAWYWGDFFYLIDQELTFDGVFE. A helical membrane pass occupies residues 275–295; the sequence is MAPHPMYSVGYAGYYGISLMA. Over 296 to 297 the chain is Cytoplasmic; it reads AS. Residues 298–318 form a helical membrane-spanning segment; sequence YKVLFISIIAHAAQFAFLVLV. Residues 319–394 are Lumenal-facing; sequence ENPHIDKTYN…LDLHRITDTS (76 aa). A disordered region spans residues 326–368; that stretch reads TYNPPPPRKRTITEHDAASQRSQSPDTPNAPSVSEENVPNATT. Over residues 344–368 the composition is skewed to polar residues; it reads SQRSQSPDTPNAPSVSEENVPNATT. Residues 395–415 traverse the membrane as a helical segment; it reads SILVQFLMFSLTVLTPSTPWY. Gln416 is a topological domain (cytoplasmic). Residues 417–437 form a helical membrane-spanning segment; the sequence is FLFVANAAIWRLWYSVGIGYL. Residues 438–470 are Lumenal-facing; it reads LNRQSNCKSWTRHFVKYGETPHEAWNQWKGTYH. The helical transmembrane segment at 471-491 threads the bilayer; the sequence is LSMVMCYASFISAVWKMYTLP. The Cytoplasmic segment spans residues 492 to 503; that stretch reads SNWGYGLAILRH. The helical transmembrane segment at 504-524 threads the bilayer; the sequence is VLGAGLISLQIWTSVSIYESL. The Lumenal segment spans residues 525 to 559; the sequence is GEFGWFYGDFFFDESPKLTYNGIYRFLNNPERVLG. Residues 560-580 traverse the membrane as a helical segment; the sequence is LAGVWGAVLITASGTVAFLAF. Topologically, residues 581-965 are cytoplasmic; it reads LSHILSLGFI…GATTPTESKE (385 aa).

Belongs to the class VI-like SAM-binding methyltransferase superfamily. CHO2 family.

It localises to the endoplasmic reticulum membrane. It catalyses the reaction a 1,2-diacyl-sn-glycero-3-phosphoethanolamine + S-adenosyl-L-methionine = a 1,2-diacyl-sn-glycero-3-phospho-N-methylethanolamine + S-adenosyl-L-homocysteine + H(+). It functions in the pathway phospholipid metabolism; phosphatidylcholine biosynthesis. Catalyzes the first step of the methylation pathway of phosphatidylcholine biosynthesis, the SAM-dependent methylation of phosphatidylethanolamine (PE) to phosphatidylmonomethylethanolamine (PMME). This is Phosphatidylethanolamine N-methyltransferase from Emericella nidulans (strain FGSC A4 / ATCC 38163 / CBS 112.46 / NRRL 194 / M139) (Aspergillus nidulans).